The primary structure comprises 306 residues: Methionyl-tRNA formyltransferase (306 aa).

Position 108-111 (108-111) interacts with (6S)-5,6,7,8-tetrahydrofolate; that stretch reads SLLP.

This sequence belongs to the Fmt family.

It carries out the reaction L-methionyl-tRNA(fMet) + (6R)-10-formyltetrahydrofolate = N-formyl-L-methionyl-tRNA(fMet) + (6S)-5,6,7,8-tetrahydrofolate + H(+). Attaches a formyl group to the free amino group of methionyl-tRNA(fMet). The formyl group appears to play a dual role in the initiator identity of N-formylmethionyl-tRNA by promoting its recognition by IF2 and preventing the misappropriation of this tRNA by the elongation apparatus. The polypeptide is Methionyl-tRNA formyltransferase (Arthrobacter sp. (strain FB24)).